The primary structure comprises 141 residues: Hemoglobin subunit alpha (141 aa).

In terms of domain architecture, Globin spans 2 to 141 (AFTACEKQTI…ICQELSSRYR (140 aa)). Residue H59 coordinates O2. H88 is a heme b binding site.

The protein belongs to the globin family. Heterotetramer of two alpha chains and two beta chains. In terms of tissue distribution, red blood cells.

In terms of biological role, involved in oxygen transport from gills to the various peripheral tissues. The sequence is that of Hemoglobin subunit alpha (HBA) from Mustelus griseus (Spotless smooth-hound).